The sequence spans 180 residues: LDLR chaperone boca (180 aa).

Residues 1 to 18 (MQTRLVLLLLALTPLVLA) form the signal peptide. A compositionally biased stretch (acidic residues) spans 48–61 (QWEEDEEPLEDDEL). Residues 48-78 (QWEEDEEPLEDDELPEHLRPQPKLDLSNLDS) are disordered. The interval 93 to 166 (TLMTFVSVTG…QERCKGVTIE (74 aa)) is structured core. The Prevents secretion from ER signature appears at 177 to 180 (KDEL).

The protein belongs to the MESD family. In terms of assembly, monomer. Interacts with Arrow and Yolkless.

Its subcellular location is the endoplasmic reticulum. Chaperone specifically assisting the folding of beta-propeller/EGF modules within the family of low-density lipoprotein receptors (LDLRs). Acts as a modulator of the Wg pathway, since some LDLRs are coreceptors for the canonical Wnt pathway. This chain is LDLR chaperone boca (boca), found in Drosophila melanogaster (Fruit fly).